Consider the following 147-residue polypeptide: MSPKFLLFSIIAVWSCAAAIEALFIQPRSLANFLSMTLTAAKRSPQEYDGYGNYCGWGGEGTPVDSIDRCCQVHDNCYGTVNENECGHYIRNVKLIDYDWHMEGTEIVCDPKDDACGRALCKCDKDIIDCFNENDKDYNPEYNKVIG.

The N-terminal stretch at 1–19 (MSPKFLLFSIIAVWSCAAA) is a signal peptide. Positions 20 to 28 (IEALFIQPR) are excised as a propeptide. Intrachain disulfides connect C55/C71, C70/C130, C77/C123, C86/C116, and C109/C121. The Ca(2+) site is built by G56 and G58. H74 is a catalytic residue. Residue D75 coordinates Ca(2+). D124 is a catalytic residue.

It depends on Ca(2+) as a cofactor. Expressed by the venom gland.

The protein resides in the secreted. The enzyme catalyses a 1,2-diacyl-sn-glycero-3-phosphocholine + H2O = a 1-acyl-sn-glycero-3-phosphocholine + a fatty acid + H(+). In terms of biological role, PLA2 catalyzes the calcium-dependent hydrolysis of the 2-acyl groups in 3-sn-phosphoglycerides. This is Phospholipase A2 SSD387 from Scolopendra dehaani (Thai centipede).